Here is a 100-residue protein sequence, read N- to C-terminus: MIPLSHGLILAAILFVLGLTGMIIRRNLLFMLLGLEIMINASALAFVVAGSYWGHADGQVMYILAVTLAAAEASIGLALLLQLHRRRRTLDIDSVSEMHG.

3 helical membrane passes run 4–24 (LSHG…GMII), 28–48 (LLFM…AFVV), and 60–80 (VMYI…LALL).

It belongs to the complex I subunit 4L family. NDH-1 is composed of 13 different subunits. Subunits NuoA, H, J, K, L, M, N constitute the membrane sector of the complex.

It localises to the cell inner membrane. It carries out the reaction a quinone + NADH + 5 H(+)(in) = a quinol + NAD(+) + 4 H(+)(out). In terms of biological role, NDH-1 shuttles electrons from NADH, via FMN and iron-sulfur (Fe-S) centers, to quinones in the respiratory chain. The immediate electron acceptor for the enzyme in this species is believed to be ubiquinone. Couples the redox reaction to proton translocation (for every two electrons transferred, four hydrogen ions are translocated across the cytoplasmic membrane), and thus conserves the redox energy in a proton gradient. This Sodalis glossinidius (strain morsitans) protein is NADH-quinone oxidoreductase subunit K.